Consider the following 168-residue polypeptide: MEIGQYQPNLDGDGLRIGIVQARFNEPVCNGLADSCIEELERLGVTGEDVLLVTVPGALEIPLALQKLAESAQFDALIALGAVIRGETYHFELVSNESGAGITRIGLDFGIPVANAVLTTENDEQAVARMTEKGRDAARVAVEMANLAVALEQLGGDDDEEEDEEEEA.

Residues F24, 58-60 (ALE), and 82-84 (AVI) contribute to the 5-amino-6-(D-ribitylamino)uracil site. Residue 87-88 (ET) coordinates (2S)-2-hydroxy-3-oxobutyl phosphate. The active-site Proton donor is H90. N115 provides a ligand contact to 5-amino-6-(D-ribitylamino)uracil. Position 129 (R129) interacts with (2S)-2-hydroxy-3-oxobutyl phosphate.

The protein belongs to the DMRL synthase family.

The catalysed reaction is (2S)-2-hydroxy-3-oxobutyl phosphate + 5-amino-6-(D-ribitylamino)uracil = 6,7-dimethyl-8-(1-D-ribityl)lumazine + phosphate + 2 H2O + H(+). It participates in cofactor biosynthesis; riboflavin biosynthesis; riboflavin from 2-hydroxy-3-oxobutyl phosphate and 5-amino-6-(D-ribitylamino)uracil: step 1/2. Functionally, catalyzes the formation of 6,7-dimethyl-8-ribityllumazine by condensation of 5-amino-6-(D-ribitylamino)uracil with 3,4-dihydroxy-2-butanone 4-phosphate. This is the penultimate step in the biosynthesis of riboflavin. The sequence is that of 6,7-dimethyl-8-ribityllumazine synthase from Paraburkholderia xenovorans (strain LB400).